Here is a 114-residue protein sequence, read N- to C-terminus: Large ribosomal subunit protein uL22 (114 aa).

The protein belongs to the universal ribosomal protein uL22 family. As to quaternary structure, part of the 50S ribosomal subunit.

In terms of biological role, this protein binds specifically to 23S rRNA; its binding is stimulated by other ribosomal proteins, e.g. L4, L17, and L20. It is important during the early stages of 50S assembly. It makes multiple contacts with different domains of the 23S rRNA in the assembled 50S subunit and ribosome. The globular domain of the protein is located near the polypeptide exit tunnel on the outside of the subunit, while an extended beta-hairpin is found that lines the wall of the exit tunnel in the center of the 70S ribosome. The polypeptide is Large ribosomal subunit protein uL22 (Streptococcus sanguinis (strain SK36)).